Here is a 480-residue protein sequence, read N- to C-terminus: Bifunctional protein GlmU (480 aa).

Positions 1–247 are pyrophosphorylase; sequence MATPIDVVIM…AAQVAGVNSP (247 aa). UDP-N-acetyl-alpha-D-glucosamine is bound by residues K24, Q86, 91 to 92, 113 to 115, G150, E172, and N245; these read GT and SGD. Position 115 (D115) interacts with Mg(2+). Mg(2+) is bound at residue N245. The tract at residues 248–268 is linker; that stretch reads VQLAELERVYQLRQATALMEQ. The interval 269–480 is N-acetyltransferase; that stretch reads GVRLADPARF…WKRPVKVSKG (212 aa). UDP-N-acetyl-alpha-D-glucosamine is bound by residues R355 and K373. H385 (proton acceptor) is an active-site residue. 2 residues coordinate UDP-N-acetyl-alpha-D-glucosamine: Y388 and N399. Acetyl-CoA-binding positions include A402, 408 to 409, S427, G445, and R462; that span reads NY.

It in the N-terminal section; belongs to the N-acetylglucosamine-1-phosphate uridyltransferase family. This sequence in the C-terminal section; belongs to the transferase hexapeptide repeat family. In terms of assembly, homotrimer. The cofactor is Mg(2+).

It localises to the cytoplasm. It catalyses the reaction alpha-D-glucosamine 1-phosphate + acetyl-CoA = N-acetyl-alpha-D-glucosamine 1-phosphate + CoA + H(+). It carries out the reaction N-acetyl-alpha-D-glucosamine 1-phosphate + UTP + H(+) = UDP-N-acetyl-alpha-D-glucosamine + diphosphate. It participates in nucleotide-sugar biosynthesis; UDP-N-acetyl-alpha-D-glucosamine biosynthesis; N-acetyl-alpha-D-glucosamine 1-phosphate from alpha-D-glucosamine 6-phosphate (route II): step 2/2. The protein operates within nucleotide-sugar biosynthesis; UDP-N-acetyl-alpha-D-glucosamine biosynthesis; UDP-N-acetyl-alpha-D-glucosamine from N-acetyl-alpha-D-glucosamine 1-phosphate: step 1/1. It functions in the pathway bacterial outer membrane biogenesis; LPS lipid A biosynthesis. Functionally, catalyzes the last two sequential reactions in the de novo biosynthetic pathway for UDP-N-acetylglucosamine (UDP-GlcNAc). The C-terminal domain catalyzes the transfer of acetyl group from acetyl coenzyme A to glucosamine-1-phosphate (GlcN-1-P) to produce N-acetylglucosamine-1-phosphate (GlcNAc-1-P), which is converted into UDP-GlcNAc by the transfer of uridine 5-monophosphate (from uridine 5-triphosphate), a reaction catalyzed by the N-terminal domain. This Polaromonas sp. (strain JS666 / ATCC BAA-500) protein is Bifunctional protein GlmU.